The following is a 212-amino-acid chain: Adenylate kinase (212 aa).

10-15 (GAGKGT) is a binding site for ATP. The tract at residues 30-59 (ALGDIFRTIIKTSTSEAELINNYVKQGELV) is NMP. AMP is bound by residues Arg-36, 57-59 (ELV), 85-88 (GYPR), and Gln-92. The segment at 122–160 (GRYSCKNCRKIYNSYFLQPKTDNVCDVCGSSTFDYRKDD) is LID. Residue Arg-123 participates in ATP binding. The Zn(2+) site is built by Cys-126 and Cys-129. 132–133 (IY) contributes to the ATP binding site. Residues Cys-146 and Cys-149 each coordinate Zn(2+). Arg-157 and Arg-168 together coordinate AMP. Lys-196 contributes to the ATP binding site.

It belongs to the adenylate kinase family. In terms of assembly, monomer.

Its subcellular location is the cytoplasm. It catalyses the reaction AMP + ATP = 2 ADP. It functions in the pathway purine metabolism; AMP biosynthesis via salvage pathway; AMP from ADP: step 1/1. Its function is as follows. Catalyzes the reversible transfer of the terminal phosphate group between ATP and AMP. Plays an important role in cellular energy homeostasis and in adenine nucleotide metabolism. This Rickettsia akari (strain Hartford) protein is Adenylate kinase.